Here is a 292-residue protein sequence, read N- to C-terminus: Selenate reductase subunit B (292 aa).

Positions 1 to 43 form a signal peptide, tat-type signal; the sequence is MGSKETKNTSRRDFLIKGAGAAALGAGAFAISQVPLLEKLASA. 4Fe-4S ferredoxin-type domains follow at residues 84–113, 129–160, and 161–190; these read WIMVIDLKKCVGCSSCTVACVSENVLPPGV, VTKKFTPRPCMQCEHPPCTKVCPIGATYKSED, and GIVAIDYDKCIGCRYCITACPYGARTFDWG. 16 residues coordinate [4Fe-4S] cluster: C93, C96, C99, C103, C138, C141, C146, C150, C170, C173, C176, C180, C230, C233, C245, and C249.

In terms of assembly, the complex is composed of three subunits: SrdA, SrdB and SrdC. [4Fe-4S] cluster serves as cofactor. Post-translationally, predicted to be exported by the Tat system. The position of the signal peptide cleavage has not been experimentally proven.

The protein localises to the secreted. The enzyme catalyses selenite + a quinone + H2O = selenate + a quinol. In terms of biological role, component of the respiratory selenate reductase complex, which catalyzes the reduction of selenate to selenite. This subunit probably transfers electrons from SrdC to SrdA. The chain is Selenate reductase subunit B from Mesobacillus selenatarsenatis (strain DSM 18680 / JCM 14380 / FERM P-15431 / SF-1).